The primary structure comprises 397 residues: MNIHEYQGKEIMKQYGISVPRSRITFTVEEAVQAAIDLGCEVIAVKAQIHAGGRGKAGGVKITRSLEETKSAAEAILDKILITKQTGPEGKVVNQVLIEEGLKIEKECYLSCAVDSTTSTVVLIGSPEGGMDIEEVAEKTPHKIFKESIDPAIGLQQYQARRLAFNMGINEACLQEAAQCIMNIYRLFMEKDCSMVEINPLITTEEHKVVALDCKVCFDDNSLCRHPEILKYRDLTEEDPREVQASKYDLSYISLSGNIGCMVNGAGLAMATMDMIDHFGGAPANFLDVGGGATAEKVKEAFKILISDKKVAGIFVNIFGGIMKCDVIATGILQAVNALDLDVPLVVRLEGTNVELGKEILKSSWLDVITVNSMAEGAEKIVALVNGKGVVRDERLN.

An ATP-grasp domain is found at 9-244; sequence KEIMKQYGIS…LTEEDPREVQ (236 aa). ATP is bound by residues Lys46, 53–55, Glu99, Leu102, and Glu107; that span reads GRG. Mg(2+) is bound by residues Asn199 and Asp213. Substrate is bound by residues Asn264 and 321-323; that span reads GIM.

It belongs to the succinate/malate CoA ligase beta subunit family. Heterotetramer of two alpha and two beta subunits. It depends on Mg(2+) as a cofactor.

It carries out the reaction succinate + ATP + CoA = succinyl-CoA + ADP + phosphate. The enzyme catalyses GTP + succinate + CoA = succinyl-CoA + GDP + phosphate. It participates in carbohydrate metabolism; tricarboxylic acid cycle; succinate from succinyl-CoA (ligase route): step 1/1. Its function is as follows. Succinyl-CoA synthetase functions in the citric acid cycle (TCA), coupling the hydrolysis of succinyl-CoA to the synthesis of either ATP or GTP and thus represents the only step of substrate-level phosphorylation in the TCA. The beta subunit provides nucleotide specificity of the enzyme and binds the substrate succinate, while the binding sites for coenzyme A and phosphate are found in the alpha subunit. This is Succinate--CoA ligase [ADP-forming] subunit beta from Alkaliphilus metalliredigens (strain QYMF).